Reading from the N-terminus, the 110-residue chain is Large ribosomal subunit protein uL22 (110 aa).

This sequence belongs to the universal ribosomal protein uL22 family. In terms of assembly, part of the 50S ribosomal subunit.

This protein binds specifically to 23S rRNA; its binding is stimulated by other ribosomal proteins, e.g. L4, L17, and L20. It is important during the early stages of 50S assembly. It makes multiple contacts with different domains of the 23S rRNA in the assembled 50S subunit and ribosome. Its function is as follows. The globular domain of the protein is located near the polypeptide exit tunnel on the outside of the subunit, while an extended beta-hairpin is found that lines the wall of the exit tunnel in the center of the 70S ribosome. The polypeptide is Large ribosomal subunit protein uL22 (Glaesserella parasuis serovar 5 (strain SH0165) (Haemophilus parasuis)).